The sequence spans 311 residues: Homoserine kinase (311 aa).

88–98 (PEGLGLGSSGA) contributes to the ATP binding site.

Belongs to the GHMP kinase family. Homoserine kinase subfamily.

Its subcellular location is the cytoplasm. It catalyses the reaction L-homoserine + ATP = O-phospho-L-homoserine + ADP + H(+). It participates in amino-acid biosynthesis; L-threonine biosynthesis; L-threonine from L-aspartate: step 4/5. Its function is as follows. Catalyzes the ATP-dependent phosphorylation of L-homoserine to L-homoserine phosphate. The polypeptide is Homoserine kinase (Saccharolobus islandicus (strain Y.N.15.51 / Yellowstone #2) (Sulfolobus islandicus)).